Reading from the N-terminus, the 231-residue chain is Small proline-rich protein 3 (231 aa).

The interval Met1–Pro104 is disordered. Ser2 is modified (N-acetylserine). 21 tandem repeats follow at residues Glu55 to Pro62, Glu63 to Pro70, Asp71 to Pro78, Asp79 to Pro86, Glu87 to Pro94, Gly95 to Pro102, Gln103 to Pro110, Asp111 to Pro118, Glu119 to Pro126, Gly127 to Pro134, Gln135 to Pro142, Glu143 to Pro150, Gly151 to Pro158, Gln159 to Pro166, Glu167 to Pro174, Gly175 to Pro182, Gln183 to Pro190, Glu191 to Pro198, Gly199 to Pro206, Gln207 to Gln214, and Glu215 to Thr222. Residues Glu55–Thr222 are 21 X 8 AA approximate tandem repeats. A compositionally biased stretch (polar residues) spans Ser80–Pro94. The interval Lys188–Lys231 is disordered. Over residues Gln214 to Lys231 the composition is skewed to polar residues.

Belongs to the cornifin (SPRR) family. As to expression, suprabasal layers of the squamous epithelia of esophagus, tongue and oral mucosa.

It is found in the cytoplasm. In terms of biological role, can serve as a substrate in transglutaminase-catalyzed cross linking reactions and can function as a cross-linked envelope precursor. The polypeptide is Small proline-rich protein 3 (SPRR3) (Oryctolagus cuniculus (Rabbit)).